Reading from the N-terminus, the 451-residue chain is MKTKLNSSNMQLLLFVFLAWDPARLVLANIQEDEAKNNITIFTRILDRLLDGYDNRLRPGLGDSITEVFTNIYVTSFGPVSDTDMEYTIDVFFRQKWKDERLKFKGPMNILRLNNLMASKIWTPDTFFHNGKKSVAHNMTMPNKLLRIQDDGTLLYTMRLTVQAECPMHLEDFPMDAHSCPLKFGSYAYTTSEVTYIWTYNASDSVQVAPDGSRLNQYDLPGQSIGKETIKSSTGEYTVMTAHFHLKRKIGYFVIQTYLPCIMTVILSQVSFWLNRESVPARTVFGVTTVLTMTTLSISARNSLPKVAYATAMDWFIAVCYAFVFSALIEFATVNYFTKRGWAWDGKSVVNDKKKEKASVMIQNNAYAVAVANYAPNLSKDPVLSTISKSATTPEPNKKPENKPAEAKKTFNSVSKIDRMSRIVFPVLFGTFNLVYWATYLNREPVLGVSP.

A signal peptide spans 1–28; it reads MKTKLNSSNMQLLLFVFLAWDPARLVLA. Topologically, residues 29-249 are extracellular; the sequence is NIQEDEAKNN…MTAHFHLKRK (221 aa). N-linked (GlcNAc...) asparagine glycosylation is present at asparagine 38. Residue arginine 94 participates in 4-aminobutanoate binding. Asparagine 138 carries an N-linked (GlcNAc...) asparagine glycan. 4-aminobutanoate is bound at residue threonine 157. A disulfide bridge links cysteine 166 with cysteine 180. The N-linked (GlcNAc...) asparagine glycan is linked to asparagine 201. A helical transmembrane segment spans residues 250 to 270; the sequence is IGYFVIQTYLPCIMTVILSQV. Topologically, residues 271–280 are cytoplasmic; that stretch reads SFWLNRESVP. The helical transmembrane segment at 281–300 threads the bilayer; the sequence is ARTVFGVTTVLTMTTLSISA. Residues 301–311 lie on the Extracellular side of the membrane; it reads RNSLPKVAYAT. A helical membrane pass occupies residues 312–332; sequence AMDWFIAVCYAFVFSALIEFA. The Cytoplasmic portion of the chain corresponds to 333–420; sequence TVNYFTKRGW…FNSVSKIDRM (88 aa). The helical transmembrane segment at 421–441 threads the bilayer; the sequence is SRIVFPVLFGTFNLVYWATYL. Topologically, residues 442–451 are extracellular; sequence NREPVLGVSP.

Belongs to the ligand-gated ion channel (TC 1.A.9) family. Gamma-aminobutyric acid receptor (TC 1.A.9.5) subfamily. GABRA2 sub-subfamily. In terms of assembly, heteropentamer, formed by a combination of alpha (GABRA1-6), beta (GABRB1-3), gamma (GABRG1-3), delta (GABRD), epsilon (GABRE), rho (GABRR1-3), pi (GABRP) and theta (GABRQ) subunits, each subunit exhibiting distinct physiological and pharmacological properties. Interacts with UBQLN1. Interacts with KIF21B. Interacts with LHFPL4. Interacts with SHISA7; interaction leads to the regulation of GABA(A) receptor trafficking, channel deactivation kinetics and pharmacology. In terms of processing, glycosylated.

It localises to the postsynaptic cell membrane. Its subcellular location is the cell membrane. The protein resides in the cytoplasmic vesicle membrane. The protein localises to the cell projection. It is found in the dendrite. It catalyses the reaction chloride(in) = chloride(out). With respect to regulation, activated by pentobarbital. Inhibited by the antagonist bicuculline. Functionally, alpha subunit of the heteropentameric ligand-gated chloride channel gated by gamma-aminobutyric acid (GABA), a major inhibitory neurotransmitter in the brain. GABA-gated chloride channels, also named GABA(A) receptors (GABAAR), consist of five subunits arranged around a central pore and contain GABA active binding site(s) located at the alpha and beta subunit interface(s). When activated by GABA, GABAARs selectively allow the flow of chloride anions across the cell membrane down their electrochemical gradient. Chloride influx into the postsynaptic neuron following GABAAR opening decreases the neuron ability to generate a new action potential, thereby reducing nerve transmission. The alpha-2 subunit exhibits synaptogenic activity together with beta-2 and very little to no activity together with beta-3, the gamma-2 subunit being necessary but not sufficient to induce rapid synaptic contacts formation. This chain is Gamma-aminobutyric acid receptor subunit alpha-2 (GABRA2), found in Bos taurus (Bovine).